Here is an 834-residue protein sequence, read N- to C-terminus: Serine-rich coiled-coil domain-containing protein 2 (834 aa).

The tract at residues 169–212 (PKSQLNGFYGNRSAGSMQRPRANSCATRSSSGESLAQSPDSSKS) is disordered. A compositionally biased stretch (polar residues) spans 192 to 212 (SCATRSSSGESLAQSPDSSKS). Position 223 is a phosphoserine (Ser223). The span at 426-443 (RTRITPEEMSLKEEKHEN) shows a compositional bias: basic and acidic residues. Disordered regions lie at residues 426 to 454 (RTRI…DSPK), 477 to 509 (CTKH…SSDG), 573 to 628 (NMNR…SPYR), 695 to 714 (LHDI…GDKV), and 780 to 834 (APSF…RGPQ). Ser452 is modified (phosphoserine). The span at 497–507 (SSFELSPSDSS) shows a compositional bias: low complexity. Composition is skewed to basic and acidic residues over residues 573–584 (NMNRFDRPDRNV) and 601–611 (GQEHYHLSHPD). The stretch at 712-749 (DKVYKNEDLLNEIKQLKDEIKKKDEKIQLLELQLATQH) forms a coiled coil. Composition is skewed to polar residues over residues 781 to 790 (PSFSPWQGSF) and 804 to 816 (TSST…PSQT).

The protein belongs to the CCSER family.

The protein resides in the cytoplasm. Its subcellular location is the cytoskeleton. In terms of biological role, microtubule-binding protein which might play a role in microtubule bundling. This is Serine-rich coiled-coil domain-containing protein 2 (CCSER2) from Homo sapiens (Human).